We begin with the raw amino-acid sequence, 179 residues long: Signal peptidase complex catalytic subunit sec11 (179 aa).

Topologically, residues 1 to 22 (MNDIISKINPFSSIPKHQIAQQ) are cytoplasmic. A helical; Signal-anchor for type II membrane protein membrane pass occupies residues 23–43 (IVNFGLIVATALMIWKGLMIF). Topologically, residues 44–179 (SGSESPIVVV…LAVFVLSTRE (136 aa)) are lumenal. Catalysis depends on charge relay system residues S57, H96, and D122. Residues 165-176 (FLVFVLAVFVLS) form a C-terminal short (CTS) helix region.

It belongs to the peptidase S26B family. Component of the signal peptidase complex (SPC) composed of a catalytic subunit sec11 and three accessory subunits spcs1, spcs2 and spcs3. The complex induces a local thinning of the ER membrane which is used to measure the length of the signal peptide (SP) h-region of protein substrates. This ensures the selectivity of the complex towards h-regions shorter than 18-20 amino acids.

The protein resides in the endoplasmic reticulum membrane. The catalysed reaction is Cleavage of hydrophobic, N-terminal signal or leader sequences from secreted and periplasmic proteins.. Catalytic component of the signal peptidase complex (SPC) which catalyzes the cleavage of N-terminal signal sequences from nascent proteins as they are translocated into the lumen of the endoplasmic reticulum. Specifically cleaves N-terminal signal peptides that contain a hydrophobic alpha-helix (h-region) shorter than 18-20 amino acids. This chain is Signal peptidase complex catalytic subunit sec11 (sec11), found in Dictyostelium discoideum (Social amoeba).